Reading from the N-terminus, the 426-residue chain is 3-phosphoshikimate 1-carboxyvinyltransferase (426 aa).

Residues Lys-22, Ser-23, and Arg-27 each contribute to the 3-phosphoshikimate site. Residue Lys-22 participates in phosphoenolpyruvate binding. Phosphoenolpyruvate contacts are provided by Gly-96 and Arg-124. Residues Ser-170 and Ser-171 each contribute to the 3-phosphoshikimate site. Gln-172 is a phosphoenolpyruvate binding site. 4 residues coordinate 3-phosphoshikimate: Ser-198, Asp-314, Asn-337, and Lys-341. Asp-314 functions as the Proton acceptor in the catalytic mechanism. The phosphoenolpyruvate site is built by Arg-345, Arg-387, and Lys-412.

Belongs to the EPSP synthase family. As to quaternary structure, homotetramer.

Its subcellular location is the cytoplasm. It carries out the reaction 3-phosphoshikimate + phosphoenolpyruvate = 5-O-(1-carboxyvinyl)-3-phosphoshikimate + phosphate. Its pathway is metabolic intermediate biosynthesis; chorismate biosynthesis; chorismate from D-erythrose 4-phosphate and phosphoenolpyruvate: step 6/7. Catalyzes the transfer of the enolpyruvyl moiety of phosphoenolpyruvate (PEP) to the 5-hydroxyl of shikimate-3-phosphate (S3P) to produce enolpyruvyl shikimate-3-phosphate and inorganic phosphate. This is 3-phosphoshikimate 1-carboxyvinyltransferase from Vibrio cholerae serotype O1 (strain ATCC 39315 / El Tor Inaba N16961).